The sequence spans 135 residues: Protein PsiE homolog (135 aa).

The next 4 membrane-spanning stretches (helical) occupy residues 20-40 (VGLLLLAAILIVFLVKETIHL), 54-74 (YLLIEGIVIYFLYFEFIALIV), 82-102 (HFPLRYFIYIGITAIIRLIIV), and 107-127 (PIDTLIYSAAILLLVVTLYLA).

This sequence belongs to the PsiE family.

The protein resides in the cell inner membrane. The protein is Protein PsiE homolog of Serratia proteamaculans (strain 568).